We begin with the raw amino-acid sequence, 615 residues long: UvrABC system protein C (615 aa).

Residues 14–91 form the GIY-YIG domain; the sequence is TSPGCYIHKD…IKENKPKYNI (78 aa). One can recognise a UVR domain in the interval 196-231; sequence NKIIDELKGKMAAAAQTMEFERAAEYRDLIQAIGTL.

This sequence belongs to the UvrC family. Interacts with UvrB in an incision complex.

The protein resides in the cytoplasm. In terms of biological role, the UvrABC repair system catalyzes the recognition and processing of DNA lesions. UvrC both incises the 5' and 3' sides of the lesion. The N-terminal half is responsible for the 3' incision and the C-terminal half is responsible for the 5' incision. The chain is UvrABC system protein C from Streptococcus pneumoniae serotype 19F (strain G54).